The chain runs to 443 residues: Histidinol dehydrogenase (443 aa).

NAD(+)-binding residues include Tyr-141, Gln-203, and Asn-226. 3 residues coordinate substrate: Ser-249, Gln-271, and His-274. Residues Gln-271 and His-274 each coordinate Zn(2+). Active-site proton acceptor residues include Glu-339 and His-340. Substrate-binding residues include His-340, Asp-373, Glu-427, and His-432. Residue Asp-373 participates in Zn(2+) binding. His-432 is a Zn(2+) binding site.

This sequence belongs to the histidinol dehydrogenase family. Zn(2+) serves as cofactor.

It carries out the reaction L-histidinol + 2 NAD(+) + H2O = L-histidine + 2 NADH + 3 H(+). The protein operates within amino-acid biosynthesis; L-histidine biosynthesis; L-histidine from 5-phospho-alpha-D-ribose 1-diphosphate: step 9/9. In terms of biological role, catalyzes the sequential NAD-dependent oxidations of L-histidinol to L-histidinaldehyde and then to L-histidine. The chain is Histidinol dehydrogenase from Chlorobium luteolum (strain DSM 273 / BCRC 81028 / 2530) (Pelodictyon luteolum).